We begin with the raw amino-acid sequence, 173 residues long: tRNA-specific adenosine deaminase (173 aa).

Residues 9–121 (EFDEKMMRYA…DYKTGAIGSR (113 aa)) form the CMP/dCMP-type deaminase domain. Histidine 61 contributes to the Zn(2+) binding site. The active-site Proton donor is the glutamate 63. Zn(2+)-binding residues include cysteine 91 and cysteine 94.

This sequence belongs to the cytidine and deoxycytidylate deaminase family. As to quaternary structure, homodimer. It depends on Zn(2+) as a cofactor.

It catalyses the reaction adenosine(34) in tRNA + H2O + H(+) = inosine(34) in tRNA + NH4(+). Catalyzes the deamination of adenosine to inosine at the wobble position 34 of tRNA(Arg2). This Haemophilus influenzae (strain ATCC 51907 / DSM 11121 / KW20 / Rd) protein is tRNA-specific adenosine deaminase.